A 196-amino-acid chain; its full sequence is ATP-dependent Clp protease proteolytic subunit (196 aa).

Ser101 functions as the Nucleophile in the catalytic mechanism. His126 is a catalytic residue.

The protein belongs to the peptidase S14 family. As to quaternary structure, component of the chloroplastic Clp protease core complex.

It is found in the plastid. Its subcellular location is the chloroplast stroma. It carries out the reaction Hydrolysis of proteins to small peptides in the presence of ATP and magnesium. alpha-casein is the usual test substrate. In the absence of ATP, only oligopeptides shorter than five residues are hydrolyzed (such as succinyl-Leu-Tyr-|-NHMec, and Leu-Tyr-Leu-|-Tyr-Trp, in which cleavage of the -Tyr-|-Leu- and -Tyr-|-Trp bonds also occurs).. In terms of biological role, cleaves peptides in various proteins in a process that requires ATP hydrolysis. Has a chymotrypsin-like activity. Plays a major role in the degradation of misfolded proteins. The chain is ATP-dependent Clp protease proteolytic subunit from Pinus thunbergii (Japanese black pine).